A 590-amino-acid polypeptide reads, in one-letter code: J protein JJJ1 (590 aa).

A J domain is found at 3 to 72; the sequence is TCYYELLGVE…RAWYDSHKEQ (70 aa). Residues 269–284 are compositionally biased toward basic and acidic residues; that stretch reads EQRKLKEQQRKNELNN. The segment at 269–293 is disordered; sequence EQRKLKEQQRKNELNNRRKFGNDNN. Residues 338–362 form a C2H2-type 1 zinc finger; the sequence is YECFICNKTFKSEKQLKNHINTKLH. Ser-393 is modified (phosphoserine). A disordered region spans residues 441–546; that stretch reads EVEDVSSDEN…TLPSSMSPTS (106 aa). Basic residues predominate over residues 455-467; the sequence is TKNKKKRKKKKKA. Over residues 480–489 the composition is skewed to basic and acidic residues; that stretch reads DDTKDKRSNE. Position 504 is a phosphothreonine (Thr-504). Over residues 513–527 the composition is skewed to basic residues; it reads KAKKKKGKQPKKNSK. The span at 528–546 shows a compositional bias: low complexity; the sequence is STKSTPSLSTLPSSMSPTS. The C2H2-type 2 zinc finger occupies 549-573; sequence EVCTTCGESFDSRNKLFNHVKIAGH.

It localises to the nucleus. This chain is J protein JJJ1 (JJJ1), found in Saccharomyces cerevisiae (strain ATCC 204508 / S288c) (Baker's yeast).